We begin with the raw amino-acid sequence, 62 residues long: MGRCYISQKSTLFGNKRSHSMNAIKRIWKTNLQSIRIEDENGKIKKIKISARSLKKLNFKRV.

Belongs to the bacterial ribosomal protein bL28 family.

This chain is Large ribosomal subunit protein bL28, found in Phytoplasma mali (strain AT).